Reading from the N-terminus, the 522-residue chain is 2-isopropylmalate synthase (522 aa).

The 263-residue stretch at 5–267 (VIIFDTTLRD…ETGINAKEIH (263 aa)) folds into the Pyruvate carboxyltransferase domain. Mn(2+)-binding residues include Asp-14, His-202, His-204, and Asn-238. The interval 392–522 (QLQQLVVQSD…MQKNRELGGV (131 aa)) is regulatory domain.

It belongs to the alpha-IPM synthase/homocitrate synthase family. LeuA type 1 subfamily. In terms of assembly, homodimer. Mn(2+) serves as cofactor.

It is found in the cytoplasm. The enzyme catalyses 3-methyl-2-oxobutanoate + acetyl-CoA + H2O = (2S)-2-isopropylmalate + CoA + H(+). It functions in the pathway amino-acid biosynthesis; L-leucine biosynthesis; L-leucine from 3-methyl-2-oxobutanoate: step 1/4. In terms of biological role, catalyzes the condensation of the acetyl group of acetyl-CoA with 3-methyl-2-oxobutanoate (2-ketoisovalerate) to form 3-carboxy-3-hydroxy-4-methylpentanoate (2-isopropylmalate). This is 2-isopropylmalate synthase from Shewanella putrefaciens (strain CN-32 / ATCC BAA-453).